The following is a 226-amino-acid chain: Lipoprotein-releasing system ATP-binding protein LolD (226 aa).

The ABC transporter domain occupies 5-225; it reads LELVEIERHF…TLKEKKIVEL (221 aa). An ATP-binding site is contributed by 41–48; the sequence is APSGAGKS.

Belongs to the ABC transporter superfamily. Lipoprotein translocase (TC 3.A.1.125) family. The complex is composed of two ATP-binding proteins (LolD) and two transmembrane proteins (LolC and LolE).

The protein resides in the cell inner membrane. Functionally, part of the ABC transporter complex LolCDE involved in the translocation of mature outer membrane-directed lipoproteins, from the inner membrane to the periplasmic chaperone, LolA. Responsible for the formation of the LolA-lipoprotein complex in an ATP-dependent manner. In Bartonella quintana (strain Toulouse) (Rochalimaea quintana), this protein is Lipoprotein-releasing system ATP-binding protein LolD.